Consider the following 568-residue polypeptide: 2-succinyl-5-enolpyruvyl-6-hydroxy-3-cyclohexene-1-carboxylate synthase (568 aa).

Belongs to the TPP enzyme family. MenD subfamily. As to quaternary structure, homodimer. The cofactor is Mg(2+). Mn(2+) is required as a cofactor. Requires thiamine diphosphate as cofactor.

It catalyses the reaction isochorismate + 2-oxoglutarate + H(+) = 5-enolpyruvoyl-6-hydroxy-2-succinyl-cyclohex-3-ene-1-carboxylate + CO2. Its pathway is quinol/quinone metabolism; 1,4-dihydroxy-2-naphthoate biosynthesis; 1,4-dihydroxy-2-naphthoate from chorismate: step 2/7. It participates in quinol/quinone metabolism; menaquinone biosynthesis. Its function is as follows. Catalyzes the thiamine diphosphate-dependent decarboxylation of 2-oxoglutarate and the subsequent addition of the resulting succinic semialdehyde-thiamine pyrophosphate anion to isochorismate to yield 2-succinyl-5-enolpyruvyl-6-hydroxy-3-cyclohexene-1-carboxylate (SEPHCHC). The sequence is that of 2-succinyl-5-enolpyruvyl-6-hydroxy-3-cyclohexene-1-carboxylate synthase from Actinobacillus succinogenes (strain ATCC 55618 / DSM 22257 / CCUG 43843 / 130Z).